The following is a 445-amino-acid chain: Histidinol dehydrogenase (445 aa).

NAD(+) contacts are provided by Y130, Q192, and N215. S238, Q260, and H263 together coordinate substrate. The Zn(2+) site is built by Q260 and H263. Catalysis depends on proton acceptor residues E328 and H329. Residues H329, D362, E416, and H421 each contribute to the substrate site. Zn(2+) is bound at residue D362. H421 is a binding site for Zn(2+).

It belongs to the histidinol dehydrogenase family. Zn(2+) serves as cofactor.

The enzyme catalyses L-histidinol + 2 NAD(+) + H2O = L-histidine + 2 NADH + 3 H(+). The protein operates within amino-acid biosynthesis; L-histidine biosynthesis; L-histidine from 5-phospho-alpha-D-ribose 1-diphosphate: step 9/9. Its function is as follows. Catalyzes the sequential NAD-dependent oxidations of L-histidinol to L-histidinaldehyde and then to L-histidine. In Gloeobacter violaceus (strain ATCC 29082 / PCC 7421), this protein is Histidinol dehydrogenase.